The sequence spans 223 residues: Endonuclease V (223 aa).

Positions 35 and 103 each coordinate Mg(2+).

Belongs to the endonuclease V family. Mg(2+) is required as a cofactor.

Its subcellular location is the cytoplasm. The enzyme catalyses Endonucleolytic cleavage at apurinic or apyrimidinic sites to products with a 5'-phosphate.. DNA repair enzyme involved in the repair of deaminated bases. Selectively cleaves double-stranded DNA at the second phosphodiester bond 3' to a deoxyinosine leaving behind the intact lesion on the nicked DNA. This is Endonuclease V from Escherichia coli O139:H28 (strain E24377A / ETEC).